The primary structure comprises 230 residues: tRNA (guanine-N(7)-)-methyltransferase (230 aa).

S-adenosyl-L-methionine is bound by residues Glu61, Glu86, Asp113, and Asp135. Asp135 is a catalytic residue. Residues Lys139, Asp171, and 209-212 (TRYE) each bind substrate.

It belongs to the class I-like SAM-binding methyltransferase superfamily. TrmB family.

The catalysed reaction is guanosine(46) in tRNA + S-adenosyl-L-methionine = N(7)-methylguanosine(46) in tRNA + S-adenosyl-L-homocysteine. It participates in tRNA modification; N(7)-methylguanine-tRNA biosynthesis. Functionally, catalyzes the formation of N(7)-methylguanine at position 46 (m7G46) in tRNA. The polypeptide is tRNA (guanine-N(7)-)-methyltransferase (Rhizobium etli (strain ATCC 51251 / DSM 11541 / JCM 21823 / NBRC 15573 / CFN 42)).